Consider the following 991-residue polypeptide: MPEYMINGIPVNFPFEPYELQKNYMAKVIECLQNKTNGVLESPTGTGKTLSLLCSSMAWLLHMKSKQPKHRMETIDTLPEPPELSNAKHAALDPEQALALQQQKANAKMKIIYASRTHSQLSQAMQELKNTSYLFVRSIILGSRDQLCIHPDISKQENNAIKTVLCRESVKARNCSFYNRVETAKDRPDVATVPVMDIEDLVTVGRKLKACPYYLSKELVEQADVIFMPYNYLLDPKARKSNGLSLQNTVIILDEAHNVEKMCEEVGSALLRSSDIALAIEDTSSVIKSMMDGGGAWTGDGEKQLELTLDDLVLLKEILLGVEKAVDDIPILFSQGGTTHPGTYIFDLLEKANIKFGNINVVLQVMNSLITHITTEKTGGFVRRGAGLQSMVDFLEVVFASSGPEYRQAVEKCFRVHIEPEEPKQLAKGGVKRADGWTATKQPLKAPVKSTSKVINFWCFNPGFGMRQLVDSGTRSIILTSGTLAPLKPFISELSLPVAVSLENPHIIARSQVYVKVITHGPDRVELNSSFKNRSNPEYIASLGRTALSLCPIIPGGLLIFFPSYPLLNKCSEEWQASGIWGQISRLKQIFVEPRGKDQFTTTMAEYYAQVRDPASRGAIFMAVCRGKVSEGLDFADANGRAVMITGLPFPPMMDARVVLKKQYLDTNRTRENELITGNDWYSLEASRAVNQAIGRVIRHKDDYGAILLCDSRFQNARQQAQLSAWIHSHLRESSAVPNFGTVVGEMSRFFRHMSTASLPARVRDVCAVKDEPAEAAKEEPGKGKRFATAVKGGGINTFAEKFRLSEYLPDSMKVNPHSRSTKSAGDDAEAGGSGLVTLYKRERNDGKGPPPSPGAFEATRKRRKIVIVPQPLVKREDTEDGENVLLPVKQEPDVAAAANVKRVAPENRVDFLREVKCSLSAGSYKTFLQSLAVYNRNSDFVLFIKQLCSCFNKPHLHYLLLAMRRFIKQEHTLEFDTIIEKIEARFFSDM.

The 313-residue stretch at 7-319 (NGIPVNFPFE…DDLVLLKEIL (313 aa)) folds into the Helicase ATP-binding domain. 42-49 (SPTGTGKT) is an ATP binding site. [4Fe-4S] cluster-binding residues include C148, C166, C175, and C211. The DEAH box signature appears at 254-257 (DEAH). Positions 812-833 (SMKVNPHSRSTKSAGDDAEAGG) are disordered.

The protein belongs to the helicase family. RAD3/XPD subfamily.

The protein localises to the nucleus. It catalyses the reaction ATP + H2O = ADP + phosphate + H(+). A probable ATP-dependent DNA helicase implicated in DNA repair and the maintenance of genomic stability. Acts as an anti-recombinase to counteract toxic recombination and limit crossover during meiosis. Regulates meiotic recombination and crossover homeostasis by physically dissociating strand invasion events and thereby promotes noncrossover repair by meiotic synthesis dependent strand annealing (SDSA) as well as disassembly of D loop recombination intermediates. The sequence is that of Regulator of telomere elongation helicase 1 homolog from Anopheles gambiae (African malaria mosquito).